The chain runs to 217 residues: 3,4-dihydroxy-2-butanone 4-phosphate synthase (217 aa).

Residues 37-38 (RE), Asp-42, 150-154 (RGGHT), and Glu-174 contribute to the D-ribulose 5-phosphate site. Residue Glu-38 coordinates Mg(2+). His-153 contacts Mg(2+).

This sequence belongs to the DHBP synthase family. Homodimer. Mg(2+) serves as cofactor. Requires Mn(2+) as cofactor.

The catalysed reaction is D-ribulose 5-phosphate = (2S)-2-hydroxy-3-oxobutyl phosphate + formate + H(+). It functions in the pathway cofactor biosynthesis; riboflavin biosynthesis; 2-hydroxy-3-oxobutyl phosphate from D-ribulose 5-phosphate: step 1/1. In terms of biological role, catalyzes the conversion of D-ribulose 5-phosphate to formate and 3,4-dihydroxy-2-butanone 4-phosphate. In Escherichia coli O127:H6 (strain E2348/69 / EPEC), this protein is 3,4-dihydroxy-2-butanone 4-phosphate synthase.